Reading from the N-terminus, the 214-residue chain is Osteoclast-stimulating factor 1 (214 aa).

The SH3 domain occupies 12 to 71 (GQVKVFRALFTFDPRTPDELYFEEGDILYISDTSDTNWWKGTCRGRTGLIPSNYVAEQAE). 3 ANK repeats span residues 72–101 (TIDH…GING), 105–135 (AGNT…ELNQ), and 139–168 (LGDT…RTDI).

In terms of tissue distribution, ubiquitously expressed.

It localises to the cytoplasm. In terms of biological role, induces bone resorption, acting probably through a signaling cascade which results in the secretion of factor(s) enhancing osteoclast formation and activity. The chain is Osteoclast-stimulating factor 1 (ostf1) from Monopterus albus (Swamp eel).